The sequence spans 299 residues: Probable lipid kinase YegS (299 aa).

The DAGKc domain occupies 2–133 (AEFPASLLIL…IDMAQVNKQT (132 aa)). Residues T40, 66–72 (GDGTINE), and T95 contribute to the ATP site. Mg(2+)-binding residues include L215, D218, and L220. The active-site Proton acceptor is the E271.

This sequence belongs to the diacylglycerol/lipid kinase family. YegS lipid kinase subfamily. Requires Mg(2+) as cofactor. The cofactor is Ca(2+).

The protein localises to the cytoplasm. In terms of biological role, probably phosphorylates lipids; the in vivo substrate is unknown. The polypeptide is Probable lipid kinase YegS (Escherichia coli O6:K15:H31 (strain 536 / UPEC)).